The chain runs to 235 residues: Large ribosomal subunit protein uL1 (235 aa).

The protein belongs to the universal ribosomal protein uL1 family. In terms of assembly, part of the 50S ribosomal subunit.

In terms of biological role, binds directly to 23S rRNA. The L1 stalk is quite mobile in the ribosome, and is involved in E site tRNA release. Its function is as follows. Protein L1 is also a translational repressor protein, it controls the translation of the L11 operon by binding to its mRNA. This Mycobacterium tuberculosis (strain ATCC 25177 / H37Ra) protein is Large ribosomal subunit protein uL1.